Reading from the N-terminus, the 604-residue chain is MNIVENSIFLSNLMKSANTFELKYDLSCELYRMSTYSTFPAGVPVSERSLARAGFYYTGVNDKVKCFCCGLMLDNWKRGDSPTEKHKKLYPSCRFVQSLNSVNNLEATSQPTFPSSVTNSTHSLLPGTENSGYFRGSYSNSPSNPVNSRANQDFSALMRSSYHCAMNNENARLLTFQTWPLTFLSPTDLAKAGFYYIGPGDRVACFACGGKLSNWEPKDNAMSEHLRHFPKCPFIENQLQDTSRYTVSNLSMQTHAARFKTFFNWPSSVLVNPEQLASAGFYYVGNSDDVKCFCCDGGLRCWESGDDPWVQHAKWFPRCEYLIRIKGQEFIRQVQASYPHLLEQLLSTSDSPGDENAESSIIHFEPGEDHSEDAIMMNTPVINAAVEMGFSRSLVKQTVQRKILATGENYRLVNDLVLDLLNAEDEIREEERERATEEKESNDLLLIRKNRMALFQHLTCVIPILDSLLTAGIINEQEHDVIKQKTQTSLQARELIDTILVKGNIAATVFRNSLQEAEAVLYEHLFVQQDIKYIPTEDVSDLPVEEQLRRLQEERTCKVCMDKEVSIVFIPCGHLVVCKDCAPSLRKCPICRSTIKGTVRTFLS.

3 BIR repeats span residues 29-96 (ELYR…CRFV), 169-235 (ENAR…CPFI), and 255-322 (HAAR…CEYL). Zn(2+)-binding residues include Cys292, Cys295, His312, and Cys319. Residues 439–529 (KESNDLLLIR…VLYEHLFVQQ (91 aa)) enclose the CARD domain. The segment at 557–592 (CKVCMDKEVSIVFIPCGHLVVCKDCAPSLRKCPICR) adopts an RING-type zinc-finger fold.

This sequence belongs to the IAP family. In terms of assembly, interacts with PRSS25; interaction inhibits apoptotic suppressor activity. The BIR motifs region interacts with TNF receptor associated factors 1 and 2 (TRAF1 and TRAF2) to form a heteromeric complex, which is then recruited to the tumor necrosis factor receptor 2 (TNFR2). Interaction with TRAF2 is required for ubiquitination of IKBKE, degradation of NFKBIA and activation of NF-kappa-B. Interacts with RIP1, RIP2, RIP3, RIP4 and USP19. In terms of processing, auto-ubiquitinated and degraded by the proteasome in apoptotic cells. In terms of tissue distribution, highly expressed in fetal lung, and kidney. In the adult, expression is mainly seen in lymphoid tissues, including spleen, thymus and peripheral blood lymphocytes.

It localises to the cytoplasm. Its subcellular location is the nucleus. It carries out the reaction S-ubiquitinyl-[E2 ubiquitin-conjugating enzyme]-L-cysteine + [acceptor protein]-L-lysine = [E2 ubiquitin-conjugating enzyme]-L-cysteine + N(6)-ubiquitinyl-[acceptor protein]-L-lysine.. USP19 regulates the stability of BIRC3/c-IAP2 by preventing its ubiquitination. Its function is as follows. Multi-functional protein which regulates not only caspases and apoptosis, but also modulates inflammatory signaling and immunity, mitogenic kinase signaling and cell proliferation, as well as cell invasion and metastasis. Acts as an E3 ubiquitin-protein ligase regulating NF-kappa-B signaling and regulates both canonical and non-canonical NF-kappa-B signaling by acting in opposite directions: acts as a positive regulator of the canonical pathway and suppresses constitutive activation of non-canonical NF-kappa-B signaling. The target proteins for its E3 ubiquitin-protein ligase activity include: RIPK1, RIPK2, RIPK3, RIPK4, CASP3, CASP7, CASP8, IKBKE, TRAF1, and BCL10. Acts as an important regulator of innate immune signaling via regulation of Toll-like receptors (TLRs), Nodlike receptors (NLRs) and RIG-I like receptors (RLRs), collectively referred to as pattern recognition receptors (PRRs). Protects cells from spontaneous formation of the ripoptosome, a large multi-protein complex that has the capability to kill cancer cells in a caspase-dependent and caspase-independent manner. Suppresses ripoptosome formation by ubiquitinating RIPK1 and CASP8. This Homo sapiens (Human) protein is Baculoviral IAP repeat-containing protein 3 (BIRC3).